A 283-amino-acid chain; its full sequence is MKIKFTKMHGAGNDFVVIDAINQSIHFTPAQWQHLADRRFGVGADQMLVVEKPQAAGVDFRYRIYNADGGEVEQCGNGARAFVKFVTDKKLTDKQAIRVETMSGVIEPRLEANGQITVDMGAPILTPEDVPFDVSGLLCKAEGADTLWPLDIKGETHWISVLSMGNPHAVQVVADADHAPVREDGVLIEHHPRFPKRVNAGFMQIIDPHQIKLRVFERGAGETLACGTGACAAVVSGIRRGLLASPIKVQTRGGELSIAWAGDNSPVLLTGPAVTVFEGEIEL.

Residues Asn13, Gln46, and Asn66 each coordinate substrate. Cys75 serves as the catalytic Proton donor. Substrate contacts are provided by residues 76–77, Asn166, Asn199, and 217–218; these read GN and ER. Catalysis depends on Cys226, which acts as the Proton acceptor. Substrate is bound at residue 227-228; that stretch reads GT.

The protein belongs to the diaminopimelate epimerase family. In terms of assembly, homodimer.

It is found in the cytoplasm. The catalysed reaction is (2S,6S)-2,6-diaminopimelate = meso-2,6-diaminopimelate. It functions in the pathway amino-acid biosynthesis; L-lysine biosynthesis via DAP pathway; DL-2,6-diaminopimelate from LL-2,6-diaminopimelate: step 1/1. Its function is as follows. Catalyzes the stereoinversion of LL-2,6-diaminopimelate (L,L-DAP) to meso-diaminopimelate (meso-DAP), a precursor of L-lysine and an essential component of the bacterial peptidoglycan. The polypeptide is Diaminopimelate epimerase (Herminiimonas arsenicoxydans).